Here is a 325-residue protein sequence, read N- to C-terminus: Olfactory receptor 14L1 (325 aa).

Topologically, residues M1–I43 are extracellular. Residues V44–I64 traverse the membrane as a helical segment. Residues I65–H72 lie on the Cytoplasmic side of the membrane. A helical membrane pass occupies residues L73 to S93. Residues V94–L117 are Extracellular-facing. The chain crosses the membrane as a helical span at residues Q118–Y138. Residues D139–E151 are Cytoplasmic-facing. A helical transmembrane segment spans residues V152–I172. Topologically, residues C173 to E214 are extracellular. Residues I215–S235 form a helical membrane-spanning segment. Topologically, residues Y236 to T255 are cytoplasmic. The helical transmembrane segment at F256–A276 threads the bilayer. Topologically, residues Y277–D289 are extracellular. The helical transmembrane segment at V290–L310 threads the bilayer. The Cytoplasmic portion of the chain corresponds to R311 to P325.

The protein belongs to the G-protein coupled receptor 1 family.

It is found in the cell membrane. Odorant receptor. This Homo sapiens (Human) protein is Olfactory receptor 14L1.